Reading from the N-terminus, the 271-residue chain is Tryptophan synthase alpha chain (271 aa).

Catalysis depends on proton acceptor residues glutamate 51 and aspartate 62.

Belongs to the TrpA family. As to quaternary structure, tetramer of two alpha and two beta chains.

It catalyses the reaction (1S,2R)-1-C-(indol-3-yl)glycerol 3-phosphate + L-serine = D-glyceraldehyde 3-phosphate + L-tryptophan + H2O. The protein operates within amino-acid biosynthesis; L-tryptophan biosynthesis; L-tryptophan from chorismate: step 5/5. Functionally, the alpha subunit is responsible for the aldol cleavage of indoleglycerol phosphate to indole and glyceraldehyde 3-phosphate. The chain is Tryptophan synthase alpha chain from Prochlorococcus marinus (strain NATL2A).